Here is a 179-residue protein sequence, read N- to C-terminus: ATP synthase subunit delta (179 aa).

It belongs to the ATPase delta chain family. F-type ATPases have 2 components, F(1) - the catalytic core - and F(0) - the membrane proton channel. F(1) has five subunits: alpha(3), beta(3), gamma(1), delta(1), epsilon(1). F(0) has three main subunits: a(1), b(2) and c(10-14). The alpha and beta chains form an alternating ring which encloses part of the gamma chain. F(1) is attached to F(0) by a central stalk formed by the gamma and epsilon chains, while a peripheral stalk is formed by the delta and b chains.

The protein localises to the cell membrane. F(1)F(0) ATP synthase produces ATP from ADP in the presence of a proton or sodium gradient. F-type ATPases consist of two structural domains, F(1) containing the extramembraneous catalytic core and F(0) containing the membrane proton channel, linked together by a central stalk and a peripheral stalk. During catalysis, ATP synthesis in the catalytic domain of F(1) is coupled via a rotary mechanism of the central stalk subunits to proton translocation. Its function is as follows. This protein is part of the stalk that links CF(0) to CF(1). It either transmits conformational changes from CF(0) to CF(1) or is implicated in proton conduction. This is ATP synthase subunit delta from Clostridium botulinum (strain Kyoto / Type A2).